The following is a 501-amino-acid chain: L-arabinose isomerase (501 aa).

Residues glutamate 306, glutamate 333, histidine 350, and histidine 450 each coordinate Mn(2+).

This sequence belongs to the arabinose isomerase family. As to quaternary structure, homohexamer. It depends on Mn(2+) as a cofactor.

The enzyme catalyses beta-L-arabinopyranose = L-ribulose. Its pathway is carbohydrate degradation; L-arabinose degradation via L-ribulose; D-xylulose 5-phosphate from L-arabinose (bacterial route): step 1/3. Catalyzes the conversion of L-arabinose to L-ribulose. In Serratia proteamaculans (strain 568), this protein is L-arabinose isomerase.